Here is a 267-residue protein sequence, read N- to C-terminus: MKAFLFAAAATLVITALSAPAFAGTPVTLRMDTTDADGRITLGDLFDGVSGPAANVVVAARMSATAVLEAGQVQMSARRAGYVWTNANGVRRIIVREGVDNGGVSSSAAPGAQLAGARLAGAPRANVEVLAYARSLSAGEIVQPQDLIWVKMAGAPADAPRDADAVIGLAAKRPLREGAPVGMKDVAAAQVIKSGDLITITYEDGGISLSLQGKAMAAAAAGDVFAVQNTLSKKIIQAVAVGPGAAAVGPQAQSLQARSQPLRFAAR.

Residues 1-29 (MKAFLFAAAATLVITALSAPAFAGTPVTL) form the signal peptide.

As to quaternary structure, flaD is a subunit of the flagellar transenvelope basal body.

The protein resides in the periplasm. Its subcellular location is the bacterial flagellum basal body. In terms of biological role, flaD might be the structural protein of the distal basal body ring P, or it is necessary for the assembly of the P ring. This chain is Distal basal body ring component protein (flaD), found in Caulobacter vibrioides (strain ATCC 19089 / CIP 103742 / CB 15) (Caulobacter crescentus).